The chain runs to 1406 residues: Receptor-type tyrosine-protein phosphatase eta (1406 aa).

The first 24 residues, 1–24 (MRRLPLLPPCPLLLLLLLPAEVRC), serve as a signal peptide directing secretion. The Extracellular portion of the chain corresponds to 25-1044 (TTACTDDCSL…LPQDPGVIAG (1020 aa)). N-linked (GlcNAc...) asparagine glycosylation is found at Asn36, Asn52, Asn97, Asn103, Asn118, Asn124, Asn186, Asn192, Asn243, Asn275, Asn281, Asn296, Asn302, Asn331, Asn332, Asn364, Asn385, Asn391, Asn453, Asn459, Asn484, Asn500, Asn510, Asn547, Asn568, Asn630, Asn636, Asn651, Asn657, Asn719, Asn745, Asn750, Asn766, Asn776, Asn804, and Asn828. The disordered stretch occupies residues 39–72 (EEMGTSSNDELSVNATSGNRRLSEDVSLPGRAMS). Over residues 41-58 (MGTSSNDELSVNATSGNR) the composition is skewed to polar residues. 10 consecutive Fibronectin type-III domains span residues 82–170 (AVLD…TKPS), 171–259 (PVLD…TKPS), 260–343 (PVLD…SLNL), 346–437 (KPSP…TKPS), 438–523 (PVLD…SLYT), 524–614 (KPTP…TKPR), 615–703 (AVLH…TKPS), 704–793 (MVLN…VPSS), 794–888 (VNAF…TDPP), and 887–979 (PPVP…IVDV). Residue Asn1010 is glycosylated (N-linked (GlcNAc...) asparagine). A helical membrane pass occupies residues 1045–1065 (AVIGCLLAILAVVAIGGYIFW). Residues 1066–1406 (RRRRKDKRNT…AFGKANGYHA (341 aa)) lie on the Cytoplasmic side of the membrane. Positions 1110 to 1367 (FAEEYEELKS…VFLNQCVMDI (258 aa)) constitute a Tyrosine-protein phosphatase domain. Substrate-binding positions include Asp1274, 1308-1314 (CSAGVGR), and Gln1352. The active-site Phosphocysteine intermediate is Cys1308.

It belongs to the protein-tyrosine phosphatase family. Receptor class 3 subfamily. As to expression, found on the apical surfaces of retinal Mueller cells, renal tubule cells and intestinal brush border cells.

Its subcellular location is the cell membrane. It localises to the cell projection. It is found in the ruffle membrane. The protein localises to the cell junction. It carries out the reaction O-phospho-L-tyrosyl-[protein] + H2O = L-tyrosyl-[protein] + phosphate. Functionally, tyrosine phosphatase which dephosphorylates or contributes to the dephosphorylation of several substrates. Plays a role in cell adhesion, migration, proliferation and differentiation. Has a role in megakaryocytes and platelet formation. May influence the potential of nonsensory supporting cells to either proliferate or differentiate into hair cells. In Gallus gallus (Chicken), this protein is Receptor-type tyrosine-protein phosphatase eta (PTPRJ).